Reading from the N-terminus, the 207-residue chain is dTTP/UTP pyrophosphatase (207 aa).

D87 serves as the catalytic Proton acceptor.

It belongs to the Maf family. YhdE subfamily. It depends on a divalent metal cation as a cofactor.

The protein localises to the cytoplasm. The catalysed reaction is dTTP + H2O = dTMP + diphosphate + H(+). The enzyme catalyses UTP + H2O = UMP + diphosphate + H(+). Functionally, nucleoside triphosphate pyrophosphatase that hydrolyzes dTTP and UTP. May have a dual role in cell division arrest and in preventing the incorporation of modified nucleotides into cellular nucleic acids. This is dTTP/UTP pyrophosphatase from Bordetella pertussis (strain Tohama I / ATCC BAA-589 / NCTC 13251).